The primary structure comprises 126 residues: Large ribosomal subunit protein bL12 (126 aa).

This sequence belongs to the bacterial ribosomal protein bL12 family. In terms of assembly, homodimer. Part of the ribosomal stalk of the 50S ribosomal subunit. Forms a multimeric L10(L12)X complex, where L10 forms an elongated spine to which 2 to 4 L12 dimers bind in a sequential fashion. Binds GTP-bound translation factors.

Functionally, forms part of the ribosomal stalk which helps the ribosome interact with GTP-bound translation factors. Is thus essential for accurate translation. The protein is Large ribosomal subunit protein bL12 of Corynebacterium diphtheriae (strain ATCC 700971 / NCTC 13129 / Biotype gravis).